The sequence spans 132 residues: Agouti-signaling protein (132 aa).

A signal peptide spans 1 to 22 (MDVTRLLLATLLVFLCFFTVYS). The N-linked (GlcNAc...) asparagine glycan is linked to asparagine 39. The interval 62–88 (ISRKEAEKKRSSKKEASMKKVAQPRTP) is disordered. The span at 63-79 (SRKEAEKKRSSKKEASM) shows a compositional bias: basic and acidic residues. Cystine bridges form between cysteine 93/cysteine 108, cysteine 100/cysteine 114, cysteine 107/cysteine 125, cysteine 111/cysteine 132, and cysteine 116/cysteine 123. An Agouti domain is found at 93 to 132 (CVATRYSCKPPAPACCDPCASCQCRFFRSACSCRVLRLNC).

Its subcellular location is the secreted. Functionally, involved in the regulation of melanogenesis. The binding of ASP to MC1R precludes alpha-MSH initiated signaling and thus blocks production of cAMP, leading to a down-regulation of eumelanogenesis (brown/black pigment) and thus increasing synthesis of pheomelanin (yellow/red pigment). The protein is Agouti-signaling protein (ASIP) of Semnopithecus entellus (Northern plains gray langur).